The chain runs to 127 residues: Glycine cleavage system H protein (127 aa).

The Lipoyl-binding domain maps to 22–104 (EVVIGITHFA…YEGAWMVKVE (83 aa)). K63 carries the N6-lipoyllysine modification.

The protein belongs to the GcvH family. The glycine cleavage system is composed of four proteins: P, T, L and H. (R)-lipoate serves as cofactor.

Functionally, the glycine cleavage system catalyzes the degradation of glycine. The H protein shuttles the methylamine group of glycine from the P protein to the T protein. Is also involved in protein lipoylation via its role as an octanoyl/lipoyl carrier protein intermediate. This is Glycine cleavage system H protein from Bacillus cereus (strain ATCC 10987 / NRS 248).